The chain runs to 78 residues: uncharacterized protein (78 aa).

Helical transmembrane passes span 13–35 and 50–72; these read AGVG…PTGI and GTTF…FYYF.

The protein resides in the cell membrane. This is an uncharacterized protein from Pasteurella multocida (strain Pm70).